The following is a 340-amino-acid chain: GTPase Obg (340 aa).

Residues 1–158 (MSFIDEAKIY…KHIILKLKII (158 aa)) form the Obg domain. Residues 159–325 (SDVGIIGLPN…LSTLIKQIHK (167 aa)) form the OBG-type G domain. Residues 165 to 172 (GLPNAGKS), 190 to 194 (FTTLE), 211 to 214 (DIPG), 278 to 281 (NKSD), and 306 to 308 (SSI) contribute to the GTP site. Mg(2+) is bound by residues Ser172 and Thr192.

It belongs to the TRAFAC class OBG-HflX-like GTPase superfamily. OBG GTPase family. In terms of assembly, monomer. It depends on Mg(2+) as a cofactor.

The protein resides in the cytoplasm. Its function is as follows. An essential GTPase which binds GTP, GDP and possibly (p)ppGpp with moderate affinity, with high nucleotide exchange rates and a fairly low GTP hydrolysis rate. Plays a role in control of the cell cycle, stress response, ribosome biogenesis and in those bacteria that undergo differentiation, in morphogenesis control. The polypeptide is GTPase Obg (Ehrlichia canis (strain Jake)).